Consider the following 320-residue polypeptide: Cytosolic Fe-S cluster assembly factor NUBP1 (320 aa).

The residue at position 1 (M1) is an N-acetylmethionine. [4Fe-4S] cluster is bound by residues C8, C22, C25, and C31. 62-69 is a binding site for ATP; sequence GKGGVGKS. Residues C235 and C238 each coordinate [4Fe-4S] cluster. S319 is modified (phosphoserine).

It belongs to the Mrp/NBP35 ATP-binding proteins family. NUBP1/NBP35 subfamily. In terms of assembly, heterotetramer of 2 NUBP1 and 2 NUBP2 chains. Interacts with KIFC1. Interacts with the BBS/CCT complex subunit CCT1. Requires [4Fe-4S] cluster as cofactor.

The protein localises to the cytoplasm. It localises to the nucleus. Its subcellular location is the cell projection. The protein resides in the cytoskeleton. It is found in the cilium axoneme. The protein localises to the cilium basal body. It localises to the microtubule organizing center. Its subcellular location is the centrosome. The protein resides in the centriole. Its function is as follows. Component of the cytosolic iron-sulfur (Fe/S) protein assembly (CIA) machinery. Required for maturation of extramitochondrial Fe-S proteins. The NUBP1-NUBP2 heterotetramer forms a Fe-S scaffold complex, mediating the de novo assembly of an Fe-S cluster and its transfer to target apoproteins. Implicated in the regulation of centrosome duplication. Negatively regulates cilium formation and structure. In Rattus norvegicus (Rat), this protein is Cytosolic Fe-S cluster assembly factor NUBP1.